The sequence spans 394 residues: S-adenosylmethionine synthase 1 (394 aa).

Glu-11 contacts Mg(2+). His-17 is an ATP binding site. A K(+)-binding site is contributed by Glu-45. Residues Glu-58 and Gln-101 each coordinate L-methionine. ATP-binding positions include 169–171 (DGK), 237–240 (SGRF), Asp-248, 254–255 (RK), Ala-271, Lys-275, and Lys-279. Asp-248 serves as a coordination point for L-methionine. Lys-279 is an L-methionine binding site.

The protein belongs to the AdoMet synthase family. Homotetramer. It depends on Mn(2+) as a cofactor. The cofactor is Mg(2+). Requires Co(2+) as cofactor. K(+) serves as cofactor.

Its subcellular location is the cytoplasm. The enzyme catalyses L-methionine + ATP + H2O = S-adenosyl-L-methionine + phosphate + diphosphate. The protein operates within amino-acid biosynthesis; S-adenosyl-L-methionine biosynthesis; S-adenosyl-L-methionine from L-methionine: step 1/1. Catalyzes the formation of S-adenosylmethionine from methionine and ATP. The reaction comprises two steps that are both catalyzed by the same enzyme: formation of S-adenosylmethionine (AdoMet) and triphosphate, and subsequent hydrolysis of the triphosphate. The chain is S-adenosylmethionine synthase 1 (SAM1) from Hordeum vulgare (Barley).